The chain runs to 349 residues: Anthranilate phosphoribosyltransferase (349 aa).

5-phospho-alpha-D-ribose 1-diphosphate is bound by residues G86, 89–90 (GD), T94, 96–99 (NIST), 114–122 (KHGNKSASG), and S126. G86 serves as a coordination point for anthranilate. S98 contributes to the Mg(2+) binding site. Residue N117 coordinates anthranilate. R172 serves as a coordination point for anthranilate. 2 residues coordinate Mg(2+): D231 and E232.

The protein belongs to the anthranilate phosphoribosyltransferase family. As to quaternary structure, homodimer. The cofactor is Mg(2+).

It carries out the reaction N-(5-phospho-beta-D-ribosyl)anthranilate + diphosphate = 5-phospho-alpha-D-ribose 1-diphosphate + anthranilate. Its pathway is amino-acid biosynthesis; L-tryptophan biosynthesis; L-tryptophan from chorismate: step 2/5. Catalyzes the transfer of the phosphoribosyl group of 5-phosphorylribose-1-pyrophosphate (PRPP) to anthranilate to yield N-(5'-phosphoribosyl)-anthranilate (PRA). The polypeptide is Anthranilate phosphoribosyltransferase (Prochlorococcus marinus (strain MIT 9312)).